A 285-amino-acid polypeptide reads, in one-letter code: Transcription factor JAMYB (285 aa).

HTH myb-type domains are found at residues 26–78 (SAEL…LNYL) and 79–133 (RPDV…QKHA). DNA-binding regions (H-T-H motif) lie at residues 54–78 (WNAL…LNYL) and 106–129 (WSKI…RTRV).

The protein localises to the nucleus. Functionally, probable transcription factor that may be involved in the jasmonate-dependent defense responses to the rice blast fungus Magnaporthe oryzae. Does not seem to function in the salicylic acid-dependent signaling pathway. The sequence is that of Transcription factor JAMYB from Oryza sativa subsp. japonica (Rice).